The primary structure comprises 318 residues: Serpentine receptor class delta-25 (318 aa).

7 consecutive transmembrane segments (helical) span residues 5 to 25, 38 to 58, 88 to 108, 126 to 146, 176 to 196, 226 to 246, and 258 to 278; these read LLHS…MYLA, VVIT…FFVM, HMFM…SYLF, IAFY…SIYI, ITLL…YTFI, TFKL…VAMF, and IVSV…IIFV.

It belongs to the nematode receptor-like protein srd family.

Its subcellular location is the membrane. This chain is Serpentine receptor class delta-25 (srd-25), found in Caenorhabditis elegans.